Here is a 685-residue protein sequence, read N- to C-terminus: RING finger protein 145 (685 aa).

A run of 13 helical transmembrane segments spans residues Y53 to P73, L77 to S97, F123 to T143, A151 to I171, F174 to P194, L225 to T245, Y275 to C295, T316 to I336, F340 to I360, S384 to F404, L410 to I430, L460 to G480, and W482 to A502. The RING-type; atypical zinc finger occupies C537–H575. The disordered stretch occupies residues L582 to S685. A compositionally biased stretch (low complexity) spans Q583–P602. Residues E620–A631 show a composition bias toward basic and acidic residues.

Its subcellular location is the membrane. This chain is RING finger protein 145 (rnf145), found in Danio rerio (Zebrafish).